The chain runs to 577 residues: Secreted LysM effector Lys4 (577 aa).

The N-terminal stretch at 1-19 (MRALTAAVLFVAGLTPVLA) is a signal peptide. One can recognise a LysM 1 domain in the interval 38–85 (AWYTIVKGDGCDTVEKKFKITPEQFFKWNPDVSTDCVKNFWVGNSYCV). Residues 96 to 121 (TSTTVKSSSTTQKTSSTSSKLSSSSK) are compositionally biased toward low complexity. Positions 96-135 (TSTTVKSSSTTQKTSSTSSKLSSSSKPVNTTTTPYSTRNP) are disordered. Polar residues predominate over residues 122–135 (PVNTTTTPYSTRNP). N-linked (GlcNAc...) asparagine glycosylation is found at Asn124, Asn140, Asn216, and Asn235. 3 consecutive LysM domains span residues 251 to 298 (NFYQ…YYCV), 328 to 375 (KWYQ…WYCV), and 408 to 455 (QYWL…YVCV). Over residues 464-485 (SGSTTTITGPPTKGSNPPTTTT) the composition is skewed to low complexity. The segment at 464 to 490 (SGSTTTITGPPTKGSNPPTTTTSGGGG) is disordered. A LysM 5 domain is found at 510 to 558 (FWFRGKDGASLFCADIAKDAGVSLPDFLKWNPGVGSNCESLWADTWYCV).

Belongs to the secreted LysM effector family.

In terms of biological role, might have a role in sequestration of chitin oligosaccharides (breakdown products of fungal cell walls that are released during invasion and act as triggers of host immunity) to dampen host defense. This is Secreted LysM effector Lys4 from Pochonia chlamydosporia (strain 123) (Metacordyceps chlamydosporia).